A 111-amino-acid chain; its full sequence is Large ribosomal subunit protein uL24 (111 aa).

This sequence belongs to the universal ribosomal protein uL24 family. In terms of assembly, part of the 50S ribosomal subunit.

Functionally, one of two assembly initiator proteins, it binds directly to the 5'-end of the 23S rRNA, where it nucleates assembly of the 50S subunit. In terms of biological role, one of the proteins that surrounds the polypeptide exit tunnel on the outside of the subunit. This is Large ribosomal subunit protein uL24 from Chlamydia muridarum (strain MoPn / Nigg).